A 255-amino-acid chain; its full sequence is 5-oxoprolinase subunit A (255 aa).

Belongs to the LamB/PxpA family. Forms a complex composed of PxpA, PxpB and PxpC.

The catalysed reaction is 5-oxo-L-proline + ATP + 2 H2O = L-glutamate + ADP + phosphate + H(+). In terms of biological role, catalyzes the cleavage of 5-oxoproline to form L-glutamate coupled to the hydrolysis of ATP to ADP and inorganic phosphate. This is 5-oxoprolinase subunit A from Campylobacter jejuni subsp. jejuni serotype O:2 (strain ATCC 700819 / NCTC 11168).